The following is a 332-amino-acid chain: D-alanine--D-alanine ligase (332 aa).

In terms of domain architecture, ATP-grasp spans 112-312 (KRIWRADGLP…YPDLCLRILA (201 aa)). 138–193 (FQELGAPMIVKPSREGSTIGLTKVTSLGQCEQAYRLAAQHDPEVLCEQFIDGDETT) serves as a coordination point for ATP. Mg(2+) is bound by residues aspartate 265, glutamate 279, and asparagine 281.

The protein belongs to the D-alanine--D-alanine ligase family. Mg(2+) is required as a cofactor. The cofactor is Mn(2+).

It is found in the cytoplasm. It catalyses the reaction 2 D-alanine + ATP = D-alanyl-D-alanine + ADP + phosphate + H(+). Its pathway is cell wall biogenesis; peptidoglycan biosynthesis. Functionally, cell wall formation. The sequence is that of D-alanine--D-alanine ligase from Acidovorax ebreus (strain TPSY) (Diaphorobacter sp. (strain TPSY)).